Here is a 300-residue protein sequence, read N- to C-terminus: Meiotically up-regulated gene 165 protein (300 aa).

Disordered regions lie at residues 1–38 (MLEK…HKPS) and 50–109 (TNSS…STLE). The span at 21–38 (ESHTFSSQTDDSYFHKPS) shows a compositional bias: polar residues. The span at 52 to 69 (SSVPSASRSPESIASSQS) shows a compositional bias: low complexity. Basic residues predominate over residues 94 to 103 (TLRKRGRKPK).

The protein localises to the nucleus. Functionally, has a role in meiosis. The protein is Meiotically up-regulated gene 165 protein (mug165) of Schizosaccharomyces pombe (strain 972 / ATCC 24843) (Fission yeast).